The chain runs to 459 residues: Sulfite oxidase (459 aa).

One can recognise a Cytochrome b5 heme-binding domain in the interval 4 to 83 (YPRYTREEVG…LQQYKVGELS (80 aa)). Positions 40, 65, and 69 each coordinate heme b. Residues 83-115 (SPDEAPAAPDAQDPFAGDPPRHPGLRVNSQKPF) form a disordered region. Residues 85 to 100 (DEAPAAPDAQDPFAGD) show a composition bias toward low complexity. Residues 86–95 (EAPAAPDAQD) form a hinge region. A moco domain region spans residues 96 to 323 (PFAGDPPRHP…PSRWQQNDYK (228 aa)). Mo-molybdopterin-binding positions include 136 to 140 (FTRNH), cysteine 185, aspartate 244, histidine 283, arginine 288, and 299 to 301 (SVK). The tract at residues 324–459 (GFSPCVDWDT…RGVLSTAWHR (136 aa)) is homodimerization.

Homodimer. Heme b serves as cofactor. The cofactor is Mo-molybdopterin.

The protein localises to the mitochondrion intermembrane space. The catalysed reaction is sulfite + O2 + H2O = sulfate + H2O2. It functions in the pathway energy metabolism; sulfur metabolism. Functionally, catalyzes the oxidation of sulfite to sulfate, the terminal reaction in the oxidative degradation of sulfur-containing amino acids. This Gallus gallus (Chicken) protein is Sulfite oxidase (SUOX).